Reading from the N-terminus, the 401-residue chain is Enolase (401 aa).

Residue Gln154 coordinates (2R)-2-phosphoglycerate. Glu197 (proton donor) is an active-site residue. Asp233, Glu274, and Asp301 together coordinate Mg(2+). Residues Lys326, Arg355, Ser356, and Lys377 each contribute to the (2R)-2-phosphoglycerate site. The Proton acceptor role is filled by Lys326.

This sequence belongs to the enolase family. Mg(2+) serves as cofactor.

It localises to the cytoplasm. It is found in the secreted. The protein localises to the cell surface. It catalyses the reaction (2R)-2-phosphoglycerate = phosphoenolpyruvate + H2O. Its pathway is carbohydrate degradation; glycolysis; pyruvate from D-glyceraldehyde 3-phosphate: step 4/5. In terms of biological role, catalyzes the reversible conversion of 2-phosphoglycerate (2-PG) into phosphoenolpyruvate (PEP). It is essential for the degradation of carbohydrates via glycolysis. This is Enolase from Thermoplasma acidophilum (strain ATCC 25905 / DSM 1728 / JCM 9062 / NBRC 15155 / AMRC-C165).